A 220-amino-acid chain; its full sequence is MTSVVYHAFSQKEAKELDVQHSGAQRAEAFVRAFLKRSMPRMSQQALEDHLQRKAVVLEYFTHRKQKEKRKKSKGLSAKQRRELRLFDIKPEQQRYSLFLPLHELWKQYIRDLCNGLKPDTQPQMIQAKLLKADLHGAIVSVTKSKCPSYVGVTGILLQETKHVFKIITKEDRLKVIPKLNCVFTVEIDGFISYIYGSKFQLRSSERSAKKFKAKGTIDL.

Phosphoserine is present on S10.

It belongs to the eukaryotic/archaeal RNase P protein component 1 family. As to quaternary structure, component of nuclear RNase P and RNase MRP ribonucleoproteins. RNase P consists of a catalytic RNA moiety and 10 different protein chains; POP1, POP4, POP5, POP7, RPP14, RPP21, RPP25, RPP30, RPP38 and RPP40. Within the RNase P complex, POP1, POP7 and RPP25 form the 'finger' subcomplex, POP5, RPP14, RPP40 and homodimeric RPP30 form the 'palm' subcomplex, and RPP21, POP4 and RPP38 form the 'wrist' subcomplex. All subunits of the RNase P complex interact with the catalytic RNA. Several subunits of RNase P are also part of the RNase MRP complex. RNase MRP consists of a catalytic RNA moiety and about 8 protein subunits; POP1, POP7, RPP25, RPP30, RPP38, RPP40 and possibly also POP4 and POP5.

It is found in the nucleus. It localises to the nucleolus. Its function is as follows. Component of ribonuclease P, a ribonucleoprotein complex that generates mature tRNA molecules by cleaving their 5'-ends. This chain is Ribonuclease P protein subunit p29 (POP4), found in Bos taurus (Bovine).